The chain runs to 479 residues: BURP domain-containing protein 4 (479 aa).

An N-terminal signal peptide occupies residues 1 to 46 (MVGKGNECAAARRRFSLRAAAASSSSSSFLPCLLLAAALSAGCCRA). Residues 158–177 (RADGPPKQPATFPASPNGEK) are disordered. The region spanning 254–479 (LFLMKKLHPG…PQGYVLWLAN (226 aa)) is the BURP domain. N445 carries N-linked (GlcNAc...) asparagine glycosylation.

As to expression, expressed in stamen.

This chain is BURP domain-containing protein 4 (BURP4), found in Oryza sativa subsp. japonica (Rice).